The sequence spans 398 residues: 1-deoxy-D-xylulose 5-phosphate reductoisomerase (398 aa).

Residues threonine 10, glycine 11, serine 12, isoleucine 13, glycine 36, lysine 37, asparagine 38, and asparagine 124 each coordinate NADPH. Lysine 125 lines the 1-deoxy-D-xylulose 5-phosphate pocket. Glutamate 126 is an NADPH binding site. Aspartate 150 is a binding site for Mn(2+). Residues serine 151, glutamate 152, serine 186, and histidine 209 each contribute to the 1-deoxy-D-xylulose 5-phosphate site. Mn(2+) is bound at residue glutamate 152. Glycine 215 is an NADPH binding site. Serine 222, asparagine 227, lysine 228, and glutamate 231 together coordinate 1-deoxy-D-xylulose 5-phosphate. Residue glutamate 231 participates in Mn(2+) binding.

Belongs to the DXR family. In terms of assembly, homodimer. Mg(2+) is required as a cofactor. Requires Mn(2+) as cofactor.

The enzyme catalyses 2-C-methyl-D-erythritol 4-phosphate + NADP(+) = 1-deoxy-D-xylulose 5-phosphate + NADPH + H(+). Its pathway is isoprenoid biosynthesis; isopentenyl diphosphate biosynthesis via DXP pathway; isopentenyl diphosphate from 1-deoxy-D-xylulose 5-phosphate: step 1/6. Catalyzes the NADPH-dependent rearrangement and reduction of 1-deoxy-D-xylulose-5-phosphate (DXP) to 2-C-methyl-D-erythritol 4-phosphate (MEP). The chain is 1-deoxy-D-xylulose 5-phosphate reductoisomerase from Salmonella paratyphi A (strain ATCC 9150 / SARB42).